A 345-amino-acid polypeptide reads, in one-letter code: Probable translocation protein y4yO (345 aa).

Over residues 1-22 (MSDTSEEKSHGATPKKLSDARK) the composition is skewed to basic and acidic residues. The interval 1-25 (MSDTSEEKSHGATPKKLSDARKRGQ) is disordered. Helical transmembrane passes span 87–107 (LATV…AALL), 151–171 (VLVL…TMVY), and 189–209 (QLIG…LLLQ).

Belongs to the type III secretion exporter family.

It is found in the cell membrane. Its function is as follows. Could be involved in the secretion of an unknown factor. The sequence is that of Probable translocation protein y4yO from Sinorhizobium fredii (strain NBRC 101917 / NGR234).